Here is a 290-residue protein sequence, read N- to C-terminus: 4-diphosphocytidyl-2-C-methyl-D-erythritol kinase (290 aa).

Lys-10 is an active-site residue. 96–106 (PIAAGLGGGSS) contacts ATP. Asp-138 is a catalytic residue.

It belongs to the GHMP kinase family. IspE subfamily.

The enzyme catalyses 4-CDP-2-C-methyl-D-erythritol + ATP = 4-CDP-2-C-methyl-D-erythritol 2-phosphate + ADP + H(+). Its pathway is isoprenoid biosynthesis; isopentenyl diphosphate biosynthesis via DXP pathway; isopentenyl diphosphate from 1-deoxy-D-xylulose 5-phosphate: step 3/6. Its function is as follows. Catalyzes the phosphorylation of the position 2 hydroxy group of 4-diphosphocytidyl-2C-methyl-D-erythritol. The polypeptide is 4-diphosphocytidyl-2-C-methyl-D-erythritol kinase (Caulobacter vibrioides (strain NA1000 / CB15N) (Caulobacter crescentus)).